We begin with the raw amino-acid sequence, 247 residues long: tRNA pseudouridine synthase A (247 aa).

Asp52 (nucleophile) is an active-site residue. Tyr111 lines the substrate pocket.

It belongs to the tRNA pseudouridine synthase TruA family. In terms of assembly, homodimer.

The enzyme catalyses uridine(38/39/40) in tRNA = pseudouridine(38/39/40) in tRNA. Its function is as follows. Formation of pseudouridine at positions 38, 39 and 40 in the anticodon stem and loop of transfer RNAs. This chain is tRNA pseudouridine synthase A, found in Erythrobacter litoralis (strain HTCC2594).